The sequence spans 78 residues: Large ribosomal subunit protein bL28 (78 aa).

This sequence belongs to the bacterial ribosomal protein bL28 family.

In Thioalkalivibrio sulfidiphilus (strain HL-EbGR7), this protein is Large ribosomal subunit protein bL28.